A 2215-amino-acid chain; its full sequence is Unconventional myosin-VIIa (2215 aa).

The 677-residue stretch at 65-741 (HGVEDMIRLG…HDMLLEVERD (677 aa)) folds into the Myosin motor domain. 158–165 (GESGAGKT) lines the ATP pocket. An actin-binding region spans residues 632-639 (FVRCIKPN). IQ domains lie at 745–765 (TDRV…SNFL), 768–788 (KSAA…KNYE), 791–811 (RLGF…KQYR), 814–834 (RQRI…KAFR), and 837–857 (LWAV…RLHR). Positions 858–935 (RLRVEYQRRL…LEQMEKARHE (78 aa)) are SAH. The region spanning 1017 to 1253 (YTRRPLKQPL…PSWLELQATK (237 aa)) is the MyTH4 1 domain. The 345-residue stretch at 1258–1602 (IMLPVTFMDG…LVVTFLEGLR (345 aa)) folds into the FERM 1 domain. Residue Thr-1563 is modified to Phosphothreonine. At Ser-1569 the chain carries Phosphoserine. Position 1571 is a phosphothreonine (Thr-1571). Residues 1603 to 1672 (KRSKYVVALQ…PTDCVYVMPT (70 aa)) enclose the SH3 domain. One can recognise a MyTH4 2 domain in the interval 1747-1896 (HTREPLKQAL…PHLVEVEAIQ (150 aa)). The region spanning 1902–2205 (IFHKVYFPDD…SYISQMLTAM (304 aa)) is the FERM 2 domain.

The protein belongs to the TRAFAC class myosin-kinesin ATPase superfamily. Myosin family. As to quaternary structure, might homodimerize in a two headed molecule through the formation of a coiled-coil rod. Identified in a complex with USH1C and USH1G. Interacts with MYRIP. Interacts with RPE65. Interacts with CIB2. May interact with CALM. Interacts with WHRN. Interacts with PLEKHB1 (via PH domain). Interacts with PCDH15. Interacts with TWF2. Interacts with USH1G. Interacts with MYH9. Interacts (via MyTH4-FERM domains) with cytoplasmic regions of ADGRV1 and USH2A. Interacts with PDZD7 (via MyTH4-FERM domains). Interacts with CALML4. As to expression, detected in mechanosensory stereocilia of cochlea hair cells (at protein level). Expressed in the retina, cochlea, kidney and liver.

It is found in the cytoplasm. Its subcellular location is the cell cortex. The protein resides in the cytoskeleton. The protein localises to the synapse. Functionally, myosins are actin-based motor molecules with ATPase activity. Unconventional myosins serve in intracellular movements. Their highly divergent tails bind to membranous compartments, which are then moved relative to actin filaments. In the retina, plays an important role in the renewal of the outer photoreceptor disks. Plays an important role in the distribution and migration of retinal pigment epithelial (RPE) melanosomes and phagosomes, and in the regulation of opsin transport in retinal photoreceptors. Mediates intracellular transport of RPE65 in the retina pigment epithelium. In the inner ear, plays an important role in differentiation, morphogenesis and organization of cochlear hair cell bundles. Motor protein that is a part of the functional network formed by USH1C, USH1G, CDH23 and MYO7A that mediates mechanotransduction in cochlear hair cells. Required for normal hearing. Involved in hair-cell vesicle trafficking of aminoglycosides, which are known to induce ototoxicity. This Mus musculus (Mouse) protein is Unconventional myosin-VIIa (Myo7a).